The following is a 330-amino-acid chain: RNA polymerase sigma factor RpoS (330 aa).

A sigma-70 factor domain-1 region spans residues 56–89 (DATQLYLGEIGYSPLLTAEEEVYFARRALRGDVA). The segment at 94–164 (MIESNLRLVV…ERAIMNQTRT (71 aa)) is sigma-70 factor domain-2. The Interaction with polymerase core subunit RpoC signature appears at 118–121 (DLIE). The interval 174–249 (ELNVYLRTAR…DEKENGPEDT (76 aa)) is sigma-70 factor domain-3. The interval 262–315 (WLFELNAKQREVLARRFGLLGYEAATLEDVGREIGLTRERVRQIQVEGLRRLRE) is sigma-70 factor domain-4. Positions 288–307 (LEDVGREIGLTRERVRQIQV) form a DNA-binding region, H-T-H motif.

It belongs to the sigma-70 factor family. RpoS subfamily. In terms of assembly, interacts with the RNA polymerase core enzyme and RssB.

Its subcellular location is the cytoplasm. Functionally, sigma factors are initiation factors that promote the attachment of RNA polymerase to specific initiation sites and are then released. This sigma factor is the master transcriptional regulator of the stationary phase and the general stress response. Controls, positively or negatively, the expression of several hundred genes, which are mainly involved in metabolism, transport, regulation and stress management. Protects stationary phase cells from killing induced by endoribonuclease MazF. In Escherichia coli (strain K12), this protein is RNA polymerase sigma factor RpoS.